The primary structure comprises 1028 residues: SWI/SNF-related matrix-associated actin-dependent regulator of chromatin subfamily A containing DEAD/H box 1 (1028 aa).

Methionine 1 bears the N-acetylmethionine mark. The disordered stretch occupies residues 13–81 (KRNKIEEAPE…PENDRKASIS (69 aa)). Threonine 54 carries the post-translational modification Phosphothreonine. At serine 57 the chain carries Phosphoserine. Threonine 71 is modified (phosphothreonine). A Glycyl lysine isopeptide (Lys-Gly) (interchain with G-Cter in SUMO2) cross-link involves residue lysine 77. Position 79 is a phosphoserine (serine 79). Lysine 84 participates in a covalent cross-link: Glycyl lysine isopeptide (Lys-Gly) (interchain with G-Cter in SUMO2). A phosphoserine mark is found at serine 124, serine 127, serine 132, and serine 153. Residues 158-200 (YSDNLSTVRQTRYSENLSSDLLKLIDSTSTMDGAIAAALLMFG) enclose the CUE 1 domain. Disordered stretches follow at residues 204 to 253 (GGGP…NWEK) and 303 to 348 (ASPS…KRKK). Serine 213, serine 216, serine 241, and serine 244 each carry phosphoserine. The 44-residue stretch at 253 to 296 (KQESIVLKLQKEFPNFDKEELREVLKEHEWMYTEALESLKVFAE) folds into the CUE 2 domain. Residue serine 304 is modified to Phosphoserine. Residues lysine 337 and lysine 473 each participate in a glycyl lysine isopeptide (Lys-Gly) (interchain with G-Cter in SUMO2) cross-link. The region spanning 511–679 (ALVHKHGLNG…MSLLNFVMPH (169 aa)) is the Helicase ATP-binding domain. ATP is bound at residue 523–531 (ADEMGLGKT). The DEGH box signature appears at 630 to 633 (DEGH). Residues 723 to 740 (RRVKEEVLKQLPPKKDRI) carry the Nuclear localization signal motif. Residue lysine 726 forms a Glycyl lysine isopeptide (Lys-Gly) (interchain with G-Cter in SUMO2) linkage. Positions 860–1012 (VLGCILSELK…MTTVDEGDEG (153 aa)) constitute a Helicase C-terminal domain. 899–906 (YLRLDGKT) is an ATP binding site. Lysine 998 is covalently cross-linked (Glycyl lysine isopeptide (Lys-Gly) (interchain with G-Cter in SUMO2)). A DEAD box motif is present at residues 1007–1010 (DEGD).

It belongs to the SNF2/RAD54 helicase family. In terms of assembly, binds to DNA preferentially in the vicinity of transcriptional start sites. Interacts with MSH2 and TRIM28. Part of a complex composed of TRIM28, HDAC1, HDAC2 and EHMT2. Interacts with PCNA.

The protein localises to the nucleus. The protein resides in the chromosome. It catalyses the reaction ATP + H2O = ADP + phosphate + H(+). DNA helicase that possesses intrinsic ATP-dependent nucleosome-remodeling activity and is both required for DNA repair and heterochromatin organization. Promotes DNA end resection of double-strand breaks (DSBs) following DNA damage: probably acts by weakening histone DNA interactions in nucleosomes flanking DSBs. Required for the restoration of heterochromatin organization after replication. Acts at replication sites to facilitate the maintenance of heterochromatin by directing H3 and H4 histones deacetylation, H3 'Lys-9' trimethylation (H3K9me3) and restoration of silencing. The sequence is that of SWI/SNF-related matrix-associated actin-dependent regulator of chromatin subfamily A containing DEAD/H box 1 (SMARCAD1) from Bos taurus (Bovine).